Consider the following 229-residue polypeptide: ATP synthase subunit a (229 aa).

Transmembrane regions (helical) follow at residues 25–45 (ADAI…SILA), 82–102 (FFPL…IGLI), 111–131 (NINT…IVGI), 142–162 (FLGP…IGHF), 181–201 (LVLM…MMLM), and 202–222 (GVLV…IYIQ).

Belongs to the ATPase A chain family. As to quaternary structure, F-type ATPases have 2 components, CF(1) - the catalytic core - and CF(0) - the membrane proton channel. CF(1) has five subunits: alpha(3), beta(3), gamma(1), delta(1), epsilon(1). CF(0) has three main subunits: a(1), b(2) and c(9-12). The alpha and beta chains form an alternating ring which encloses part of the gamma chain. CF(1) is attached to CF(0) by a central stalk formed by the gamma and epsilon chains, while a peripheral stalk is formed by the delta and b chains.

Its subcellular location is the cell inner membrane. Functionally, key component of the proton channel; it plays a direct role in the translocation of protons across the membrane. This chain is ATP synthase subunit a, found in Geotalea daltonii (strain DSM 22248 / JCM 15807 / FRC-32) (Geobacter daltonii).